Here is a 366-residue protein sequence, read N- to C-terminus: Putative [LysW]-aminoadipate semialdehyde/glutamate semialdehyde transaminase (366 aa).

Residues 90-91 (GT) and phenylalanine 117 each bind pyridoxal 5'-phosphate. Arginine 120 serves as a coordination point for substrate. 202 to 205 (DEVQ) serves as a coordination point for pyridoxal 5'-phosphate. Position 230 is an N6-(pyridoxal phosphate)lysine (lysine 230). Position 254 (serine 254) interacts with substrate. Threonine 255 is a binding site for pyridoxal 5'-phosphate.

Belongs to the class-III pyridoxal-phosphate-dependent aminotransferase family. LysJ subfamily. Homodimer. Pyridoxal 5'-phosphate serves as cofactor.

The protein localises to the cytoplasm. It catalyses the reaction [amino-group carrier protein]-C-terminal-gamma-(L-lysyl)-L-glutamate + 2-oxoglutarate = [amino-group carrier protein]-C-terminal-N-(1-carboxy-5-oxopentan-1-yl)-L-glutamine + L-glutamate. It carries out the reaction [amino-group carrier protein]-C-terminal-gamma-(L-ornithyl)-L-glutamate + 2-oxoglutarate = [amino-group carrier protein]-C-terminal-gamma-(L-glutamyl-5-semialdehyde)-L-glutamate + L-glutamate. It participates in amino-acid biosynthesis; L-lysine biosynthesis via AAA pathway; L-lysine from L-alpha-aminoadipate (Thermus route): step 4/5. The protein operates within amino-acid biosynthesis; L-arginine biosynthesis. In terms of biological role, involved in both the arginine and lysine biosynthetic pathways. This chain is Putative [LysW]-aminoadipate semialdehyde/glutamate semialdehyde transaminase, found in Pyrococcus furiosus (strain ATCC 43587 / DSM 3638 / JCM 8422 / Vc1).